Consider the following 521-residue polypeptide: Protein nucleotidyltransferase YdiU (521 aa).

ATP-binding residues include Gly109, Gly111, Arg112, Lys131, Asp143, Gly144, Arg194, and Arg201. Asp270 serves as the catalytic Proton acceptor. 2 residues coordinate Mg(2+): Asn271 and Asp280. ATP is bound at residue Asp280.

Belongs to the SELO family. Mg(2+) is required as a cofactor. Requires Mn(2+) as cofactor.

The enzyme catalyses L-seryl-[protein] + ATP = 3-O-(5'-adenylyl)-L-seryl-[protein] + diphosphate. It catalyses the reaction L-threonyl-[protein] + ATP = 3-O-(5'-adenylyl)-L-threonyl-[protein] + diphosphate. It carries out the reaction L-tyrosyl-[protein] + ATP = O-(5'-adenylyl)-L-tyrosyl-[protein] + diphosphate. The catalysed reaction is L-histidyl-[protein] + UTP = N(tele)-(5'-uridylyl)-L-histidyl-[protein] + diphosphate. The enzyme catalyses L-seryl-[protein] + UTP = O-(5'-uridylyl)-L-seryl-[protein] + diphosphate. It catalyses the reaction L-tyrosyl-[protein] + UTP = O-(5'-uridylyl)-L-tyrosyl-[protein] + diphosphate. Nucleotidyltransferase involved in the post-translational modification of proteins. It can catalyze the addition of adenosine monophosphate (AMP) or uridine monophosphate (UMP) to a protein, resulting in modifications known as AMPylation and UMPylation. The protein is Protein nucleotidyltransferase YdiU of Burkholderia pseudomallei (strain 1106a).